We begin with the raw amino-acid sequence, 215 residues long: Pyrrolidone-carboxylate peptidase (215 aa).

Residues E78, C141, and H165 contribute to the active site.

This sequence belongs to the peptidase C15 family. In terms of assembly, homotetramer.

The protein localises to the cytoplasm. It carries out the reaction Release of an N-terminal pyroglutamyl group from a polypeptide, the second amino acid generally not being Pro.. Its function is as follows. Removes 5-oxoproline from various penultimate amino acid residues except L-proline. The sequence is that of Pyrrolidone-carboxylate peptidase from Streptococcus pyogenes serotype M12 (strain MGAS2096).